Here is a 113-residue protein sequence, read N- to C-terminus: Putative pterin-4-alpha-carbinolamine dehydratase (113 aa).

This sequence belongs to the pterin-4-alpha-carbinolamine dehydratase family.

It carries out the reaction (4aS,6R)-4a-hydroxy-L-erythro-5,6,7,8-tetrahydrobiopterin = (6R)-L-erythro-6,7-dihydrobiopterin + H2O. This Nitrosomonas europaea (strain ATCC 19718 / CIP 103999 / KCTC 2705 / NBRC 14298) protein is Putative pterin-4-alpha-carbinolamine dehydratase.